Here is a 184-residue protein sequence, read N- to C-terminus: Flavin prenyltransferase UbiX (184 aa).

Residues 9–11 (GAS), Ser34, 85–88 (SMKT), and Arg120 contribute to the FMN site. The dimethylallyl phosphate site is built by Tyr150 and Arg166.

This sequence belongs to the UbiX/PAD1 family.

It carries out the reaction dimethylallyl phosphate + FMNH2 = prenylated FMNH2 + phosphate. Its function is as follows. Flavin prenyltransferase that catalyzes the synthesis of the prenylated FMN cofactor (prenyl-FMN) for 4-hydroxy-3-polyprenylbenzoic acid decarboxylase UbiD. The prenyltransferase is metal-independent and links a dimethylallyl moiety from dimethylallyl monophosphate (DMAP) to the flavin N5 and C6 atoms of FMN. This Methanocaldococcus jannaschii (strain ATCC 43067 / DSM 2661 / JAL-1 / JCM 10045 / NBRC 100440) (Methanococcus jannaschii) protein is Flavin prenyltransferase UbiX.